The following is a 338-amino-acid chain: Trans-enoyl reductase fsr4 (338 aa).

65–68 lines the NADP(+) pocket; sequence KDWK. Residue 147–153 participates in substrate binding; it reads AAFTAAC. NADP(+)-binding positions include 182 to 185, 205 to 208, tyrosine 227, and 277 to 278; these read SSAV, AGRA, and II.

Belongs to the zinc-containing alcohol dehydrogenase family.

Its function is as follows. Trans-enoyl reductase; part of the gene cluster that mediates the biosynthesis of fusarubins, highly pigmented naphthoquinones responsible for the coloration of the fruiting bodies. The non-reducing polyketide synthase FSR1 is responsible for the condensation of seven acetyl-CoA units to yield a haptaketide. After rings A and B are formed by aldol-type cyclization, the PKS-derived product is released as 6-O-demethylfusarubinaldehyde. Then, two hydroxyl groups at C-5 and C-10 are incorporated by FSR3, and simultaneously hydroxyl groups at C-6 and C-8 are methylated by FSR2. The aldehyde is, on the one hand, reduced by FSR3 to 8-O-methylfusarubin alcohol, which equilibrates mainly with 8-O-methylfusarubin and only small amounts of 8-O-methylnectriafurone. On the other hand, the aldehyde can be oxidized to form 8-O-methylfusarubinic acid, a reaction driven by FSR3 equilibrating with 8-O-methylfusarubinlactone, finally resulting in 8-O-methylanhydrofusarubinlactol after a further reduction step and loss of water. 8-O-Methylfusarubinic acid can also undergo decarboxylation, resulting in 8-O-methyl-13-hydroxynorjavanicin after another hydroxylation step at C-13. Both steps are most likely also accomplished by FSR3. No enzymatic function has been determined so far for either FSR4 and FSR5. Their deletion does not alter the product spectrum, but the possibility that they catalyze specific enzymatic steps during perithecium development cannot be ruled out. FSR4 might possess a regulatory function in the biosynthesis of fusarubins. In Gibberella fujikuroi (strain CBS 195.34 / IMI 58289 / NRRL A-6831) (Bakanae and foot rot disease fungus), this protein is Trans-enoyl reductase fsr4.